The chain runs to 1083 residues: Ubiquitin carboxyl-terminal hydrolase 28 (1083 aa).

Positions aspartate 60–alanine 82 are disordered. Serine 67 bears the Phosphoserine mark. The UIM domain maps to aspartate 97–isoleucine 116. Lysine 99 is covalently cross-linked (Glycyl lysine isopeptide (Lys-Gly) (interchain with G-Cter in SUMO2)). The USP domain occupies valine 162–aspartate 656. Cysteine 171 acts as the Nucleophile in catalysis. Phosphoserine is present on serine 376. The interval aspartate 483 to valine 539 is disordered. The span at lysine 487–serine 505 shows a compositional bias: polar residues. Serine 556 is modified (phosphoserine). Catalysis depends on histidine 606, which acts as the Proton acceptor. Residues glutamate 703–glutamate 728 are disordered. Over residues serine 714–glutamate 728 the composition is skewed to low complexity. Serine 720 is modified (phosphoserine). Threonine 1054 is subject to Phosphothreonine.

Belongs to the peptidase C19 family. USP28 subfamily. As to quaternary structure, interacts with ZNF304. Interacts with PRKD1. Interacts with TP53BP1. Interacts with FBXW7; following DNA damage, dissociates from FBXW7 leading to degradation of MYC. Post-translationally, degraded upon nickel ion level or hypoxia exposure. In terms of processing, phosphorylated upon DNA damage at Ser-67 and Ser-720, by ATM or ATR. Phosphorylated by PRKD1.

It localises to the nucleus. The protein localises to the nucleoplasm. The catalysed reaction is Thiol-dependent hydrolysis of ester, thioester, amide, peptide and isopeptide bonds formed by the C-terminal Gly of ubiquitin (a 76-residue protein attached to proteins as an intracellular targeting signal).. Functionally, deubiquitinase involved in DNA damage response checkpoint and MYC proto-oncogene stability. Involved in DNA damage induced apoptosis by specifically deubiquitinating proteins of the DNA damage pathway such as CLSPN. Also involved in G2 DNA damage checkpoint, by deubiquitinating CLSPN, and preventing its degradation by the anaphase promoting complex/cyclosome (APC/C). In contrast, it does not deubiquitinate PLK1. Specifically deubiquitinates MYC in the nucleoplasm, leading to prevent MYC degradation by the proteasome: acts by specifically interacting with FBXW7 (FBW7alpha) in the nucleoplasm and counteracting ubiquitination of MYC by the SCF(FBXW7) complex. Deubiquitinates ZNF304, hence preventing ZNF304 degradation by the proteasome and leading to the activated KRAS-mediated promoter hypermethylation and transcriptional silencing of tumor suppressor genes (TSGs) in a subset of colorectal cancers (CRC) cells. The polypeptide is Ubiquitin carboxyl-terminal hydrolase 28 (Usp28) (Rattus norvegicus (Rat)).